The sequence spans 126 residues: Small ribosomal subunit protein uS12 (126 aa).

Aspartate 89 bears the 3-methylthioaspartic acid mark. Positions 106–126 (GVRERRRSRSKYGAKMPRSAA) are disordered.

It belongs to the universal ribosomal protein uS12 family. In terms of assembly, part of the 30S ribosomal subunit. Contacts proteins S8 and S17. May interact with IF1 in the 30S initiation complex.

Its function is as follows. With S4 and S5 plays an important role in translational accuracy. Functionally, interacts with and stabilizes bases of the 16S rRNA that are involved in tRNA selection in the A site and with the mRNA backbone. Located at the interface of the 30S and 50S subunits, it traverses the body of the 30S subunit contacting proteins on the other side and probably holding the rRNA structure together. The combined cluster of proteins S8, S12 and S17 appears to hold together the shoulder and platform of the 30S subunit. This chain is Small ribosomal subunit protein uS12, found in Tremblaya princeps.